The following is a 525-amino-acid chain: Peptide chain release factor 3 (525 aa).

In terms of domain architecture, tr-type G spans 9–276; it reads AKRRTFAIIS…GFTRYAPAPQ (268 aa). Residues 18 to 25, 86 to 90, and 140 to 143 contribute to the GTP site; these read SHPDAGKT, DTPGH, and NKFD.

It belongs to the TRAFAC class translation factor GTPase superfamily. Classic translation factor GTPase family. PrfC subfamily.

The protein resides in the cytoplasm. In terms of biological role, increases the formation of ribosomal termination complexes and stimulates activities of RF-1 and RF-2. It binds guanine nucleotides and has strong preference for UGA stop codons. It may interact directly with the ribosome. The stimulation of RF-1 and RF-2 is significantly reduced by GTP and GDP, but not by GMP. The sequence is that of Peptide chain release factor 3 from Francisella tularensis subsp. novicida (strain U112).